The chain runs to 155 residues: Large ribosomal subunit protein uL11 (155 aa).

Belongs to the universal ribosomal protein uL11 family. As to quaternary structure, part of the ribosomal stalk of the 50S ribosomal subunit. Interacts with L10 and the large rRNA to form the base of the stalk. L10 forms an elongated spine to which L12 dimers bind in a sequential fashion forming a multimeric L10(L12)X complex.

In terms of biological role, forms part of the ribosomal stalk which helps the ribosome interact with GTP-bound translation factors. The polypeptide is Large ribosomal subunit protein uL11 (Picrophilus torridus (strain ATCC 700027 / DSM 9790 / JCM 10055 / NBRC 100828 / KAW 2/3)).